Consider the following 336-residue polypeptide: Holliday junction branch migration complex subunit RuvB (336 aa).

The interval 1–183 (MATERLVAGN…FGINSRLEFY (183 aa)) is large ATPase domain (RuvB-L). Residues leucine 22, arginine 23, glycine 64, lysine 67, threonine 68, threonine 69, 130-132 (EDF), arginine 173, tyrosine 183, and arginine 220 each bind ATP. Residue threonine 68 coordinates Mg(2+). The segment at 184-254 (QVAELEEIIR…VAREALELLQ (71 aa)) is small ATPAse domain (RuvB-S). Residues 257 to 336 (AAGLDSSDRR…LGIKPEDRLF (80 aa)) form a head domain (RuvB-H) region. Residues arginine 312 and arginine 317 each contribute to the DNA site.

Belongs to the RuvB family. As to quaternary structure, homohexamer. Forms an RuvA(8)-RuvB(12)-Holliday junction (HJ) complex. HJ DNA is sandwiched between 2 RuvA tetramers; dsDNA enters through RuvA and exits via RuvB. An RuvB hexamer assembles on each DNA strand where it exits the tetramer. Each RuvB hexamer is contacted by two RuvA subunits (via domain III) on 2 adjacent RuvB subunits; this complex drives branch migration. In the full resolvosome a probable DNA-RuvA(4)-RuvB(12)-RuvC(2) complex forms which resolves the HJ.

Its subcellular location is the cytoplasm. The enzyme catalyses ATP + H2O = ADP + phosphate + H(+). The RuvA-RuvB-RuvC complex processes Holliday junction (HJ) DNA during genetic recombination and DNA repair, while the RuvA-RuvB complex plays an important role in the rescue of blocked DNA replication forks via replication fork reversal (RFR). RuvA specifically binds to HJ cruciform DNA, conferring on it an open structure. The RuvB hexamer acts as an ATP-dependent pump, pulling dsDNA into and through the RuvAB complex. RuvB forms 2 homohexamers on either side of HJ DNA bound by 1 or 2 RuvA tetramers; 4 subunits per hexamer contact DNA at a time. Coordinated motions by a converter formed by DNA-disengaged RuvB subunits stimulates ATP hydrolysis and nucleotide exchange. Immobilization of the converter enables RuvB to convert the ATP-contained energy into a lever motion, pulling 2 nucleotides of DNA out of the RuvA tetramer per ATP hydrolyzed, thus driving DNA branch migration. The RuvB motors rotate together with the DNA substrate, which together with the progressing nucleotide cycle form the mechanistic basis for DNA recombination by continuous HJ branch migration. Branch migration allows RuvC to scan DNA until it finds its consensus sequence, where it cleaves and resolves cruciform DNA. This is Holliday junction branch migration complex subunit RuvB from Moorella thermoacetica (strain ATCC 39073 / JCM 9320).